The following is a 140-amino-acid chain: Protein PsiE homolog (140 aa).

A run of 4 helical transmembrane segments spans residues 16 to 36, 57 to 77, 85 to 105, and 110 to 130; these read IVLQYILNVALICLGVVLSVF, YHLIDSIVVFFLYFEFIVMII, HFPLRYFIYIGITAIVRLIII, and PLDLLLYACAIFVLISALFIA.

This sequence belongs to the PsiE family.

The protein localises to the cell membrane. This Bacillus cereus (strain ATCC 14579 / DSM 31 / CCUG 7414 / JCM 2152 / NBRC 15305 / NCIMB 9373 / NCTC 2599 / NRRL B-3711) protein is Protein PsiE homolog.